Reading from the N-terminus, the 165-residue chain is Copper-resistant cuproprotein CopI (165 aa).

The signal sequence occupies residues Met1 to Ala23. The segment covering Ala25–Asp42 has biased composition (basic and acidic residues). The interval Ala25–Asp50 is disordered. 4 residues coordinate Cu(2+): His93, Cys148, His153, and Met158.

It belongs to the CopI family. As to quaternary structure, monomer.

Its subcellular location is the periplasm. Involved in copper tolerance. Required for copper resistance under both aerobic and anaerobic photosynthetic growth conditions. Binds copper. Could be an important defense against copper in the periplasm and may protect not only c type cytochromes but also other proteins with cysteine residues from copper ions that may catalyze nonnative disulfide bond formation. This is Copper-resistant cuproprotein CopI from Rubrivivax gelatinosus (Rhodocyclus gelatinosus).